The following is a 515-amino-acid chain: Slowpoke-binding protein (515 aa).

The segment at Met-1–Val-31 is disordered. A compositionally biased stretch (polar residues) spans Ala-7–Val-20. 2 positions are modified to phosphoserine: Ser-54 and Ser-79. A compositionally biased stretch (polar residues) spans Ser-73–Gln-82. The interval Ser-73–Ser-94 is disordered. The tract at residues Asn-191–Asp-203 is interaction with Slo. The segment at Ser-483–Gly-503 is disordered.

As to quaternary structure, interacts specifically with Slo; which activates Slo activity. Interacts with 14-3-3-zeta when phosphorylated. Forms a heterotetrameric complex containing phosphorylated Slob, Slo and 14-3-3-zeta, which represses Slo activity due to the indirect interaction between Slo and 14-3-3-zeta. In terms of processing, phosphorylated. Phosphorylation of Ser-54 and Ser-79 is required for the interaction with 14-3-3-zeta but not with that of Slo. Expressed in head. In larval brain, it is expressed in the mushroom body. Also expressed in larval muscles.

It localises to the cytoplasm. In terms of biological role, regulator of calcium-activated channel Slo. Increases or decreases the voltage sensitivity of Slo, depending on the absence or presence of 14-3-3-zeta in the complex, respectively. This is Slowpoke-binding protein (Slob) from Drosophila melanogaster (Fruit fly).